We begin with the raw amino-acid sequence, 195 residues long: Interferon tau-5 (195 aa).

A signal peptide spans 1–23 (MAFVLSLLMALVLVSYGPGGSLG). 2 disulfide bridges follow: cysteine 24-cysteine 122 and cysteine 52-cysteine 162.

It belongs to the alpha/beta interferon family. IFN-alphaII subfamily. Constitutively and exclusively expressed in the mononuclear cells of the extraembryonic trophectoderm.

The protein resides in the secreted. Its function is as follows. Paracrine hormone primarily responsible for maternal recognition of pregnancy. Interacts with endometrial receptors, probably type I interferon receptors, and blocks estrogen receptor expression, preventing the estrogen-induced increase in oxytocin receptor expression in the endometrium. This results in the suppression of the pulsatile endometrial release of the luteolytic hormone prostaglandin F2-alpha, hindering the regression of the corpus luteum (luteolysis) and therefore a return to ovarian cyclicity. This, and a possible direct effect of IFN-tau on prostaglandin synthesis, leads in turn to continued ovarian progesterone secretion, which stimulates the secretion by the endometrium of the nutrients required for the growth of the conceptus. In summary, displays particularly high antiviral and antiproliferative potency concurrently with particular weak cytotoxicity, high antiluteolytic activity and immunomodulatory properties. In contrast with other IFNs, IFN-tau is not virally inducible. This is Interferon tau-5 (IFNT5) from Ovis aries (Sheep).